Consider the following 980-residue polypeptide: Envelope glycoprotein B (980 aa).

Residues 1-14 are compositionally biased toward polar residues; sequence MSSGCRSVGGSTWG. Disordered stretches follow at residues 1 to 20 and 88 to 118; these read MSSG…RGDG and TTPS…TETP. The first 86 residues, 1–86, serve as a signal peptide directing secretion; the sequence is MSSGCRSVGG…LFGSCVVRAV (86 aa). The Virion surface portion of the chain corresponds to 87–849; that stretch reads PTTPSPPTST…SGIASFLNNP (763 aa). Residues 96-118 are compositionally biased toward low complexity; the sequence is TPTSMSTHSHGTVDPTLLPTETP. 5 disulfides stabilise this stretch: cysteine 140-cysteine 647, cysteine 157-cysteine 603, cysteine 231-cysteine 296, cysteine 389-cysteine 437, and cysteine 668-cysteine 708. N-linked (GlcNAc...) asparagine; by host glycosylation is present at asparagine 165. Residues 197 to 203 form an involved in fusion and/or binding to host membrane region; it reads VWKGYSH. An N-linked (GlcNAc...) asparagine; by host glycan is attached at asparagine 275. Residues 282 to 290 are involved in fusion and/or binding to host membrane; that stretch reads GWMPWRHYT. Residues asparagine 380, asparagine 423, asparagine 497, asparagine 514, asparagine 515, and asparagine 560 are each glycosylated (N-linked (GlcNAc...) asparagine; by host). Residues 505-516 are compositionally biased toward low complexity; it reads LLNPNANNNNNT. The tract at residues 505-535 is disordered; sequence LLNPNANNNNNTTRRRRSLLSVPEPQPTQDG. 2 N-linked (GlcNAc...) asparagine; by host glycosylation sites follow: asparagine 727 and asparagine 749. Hydrophobic membrane proximal region stretches follow at residues 794-847 and 823-843; these read IDSV…SFLN and AVGT…SGIA. Residues 850–870 form a helical membrane-spanning segment; the sequence is FGGLAIGLLVIAGLVAAFFAY. At 871-980 the chain is on the intravirion side; it reads RYVMQIRSNP…NDTMENEKMV (110 aa). Residues 925–928 carry the Golgi targeting motif; that stretch reads YMSM. Asparagine 952 carries an N-linked (GlcNAc...) asparagine; by host glycan. An Internalization motif motif is present at residues 965–968; that stretch reads YTRL. N-linked (GlcNAc...) asparagine; by host glycosylation occurs at asparagine 971.

It belongs to the herpesviridae glycoprotein B family. In terms of assembly, homotrimer; disulfide-linked. Binds to heparan sulfate proteoglycans. Interacts with gH/gL heterodimer. A proteolytic cleavage by host furin generates two subunits that remain linked by disulfide bonds.

The protein resides in the virion membrane. It is found in the host cell membrane. The protein localises to the host endosome membrane. It localises to the host Golgi apparatus membrane. Functionally, envelope glycoprotein that forms spikes at the surface of virion envelope. Essential for the initial attachment to heparan sulfate moieties of the host cell surface proteoglycans. Involved in fusion of viral and cellular membranes leading to virus entry into the host cell. Following initial binding to its host receptors, membrane fusion is mediated by the fusion machinery composed at least of gB and the heterodimer gH/gL. May be involved in the fusion between the virion envelope and the outer nuclear membrane during virion egress. In Equine herpesvirus 1 (strain HVS25A) (EHV-1), this protein is Envelope glycoprotein B.